Here is a 423-residue protein sequence, read N- to C-terminus: UPF0597 protein TTE0269 (423 aa).

The protein belongs to the UPF0597 family.

This is UPF0597 protein TTE0269 from Caldanaerobacter subterraneus subsp. tengcongensis (strain DSM 15242 / JCM 11007 / NBRC 100824 / MB4) (Thermoanaerobacter tengcongensis).